A 382-amino-acid chain; its full sequence is MGEEAPEFRVESVALESKDCLQNAIDIGDKTYVISRSDDPKSSITIKILDKLTQTWVVPTVLGAPPNPTSSHSAVLVNNEKILIIEKGVPLNDSIWFLEVDTPFVKQQSKIKGTVVVAWSKGVIGEGQKPIVISGPSGVGKGTLIAKLMKEYPSKFGFSVSHTTRAPREKEIDGVHYHFTERSKIEEEISEGKFLEFAHVHGNVYGTSVEAVESVTDEGKRCILDIDVQGARSVRASSLEAIFIFVCPPSFEELEKRLRARGTETEEQIQKRLRNARAELDQSNSPGLFDHLLVNDDLEACYENLKKLLSLDDDHEDSNDSFIKDGKETACYSILSKTNSEILLQSETNEAEKGTTNLLSLDLSLSGGAPGRTRGLKISPVN.

One can recognise a Guanylate kinase-like domain in the interval 128–310; the sequence is QKPIVISGPS…CYENLKKLLS (183 aa). ATP is bound at residue 135–142; sequence GPSGVGKG. Active-site residues include Arg-168, Arg-261, and Arg-272. 2 residues coordinate ATP: Asn-295 and Asp-296.

It belongs to the guanylate kinase family. As to quaternary structure, monomer.

It localises to the cytoplasm. Its subcellular location is the nucleus. The catalysed reaction is GMP + ATP = GDP + ADP. Its function is as follows. Essential for recycling GMP and indirectly, cGMP. This is Guanylate kinase 1 (GK1) from Oryza sativa subsp. japonica (Rice).